We begin with the raw amino-acid sequence, 414 residues long: UPF0754 membrane protein tlr2287 (414 aa).

2 helical membrane passes run 2–22 (ADIS…IGYF) and 386–406 (AIVR…AGVL).

It belongs to the UPF0754 family.

The protein localises to the cell inner membrane. In Thermosynechococcus vestitus (strain NIES-2133 / IAM M-273 / BP-1), this protein is UPF0754 membrane protein tlr2287.